The chain runs to 387 residues: MSNGAFDAIFEYAWGQIDKPISGDFIYGKDLPKLIEIIENIFQKAQKSGSYELRLPLFSEINKDLFRTFSNTKTFFKIHKEEFDDIFFNLVNHPLREILENAFIGVDSIPSDFIVSMNLNSPSKFLVENKNKNTEGAGISTPRKKLTESPIKLLSRNNIGKALEVQVEELKRELTAKQSLLQENERQVSELKIRLETYQEKYASIQQRFSDLQKARQVEDNQNSSRTSDPGSPLVTGIDQKAILEEFRRRLQRQTDTISFLKDQIRRERGLNCSNDKVSHSKRKHATTDGDGTFKNFISAVPSNIWVKATIRIIVCFALLAGVLPYIRKYVYAHDTPSQNSRLQLSWWENSGILSKIVWFFEDQTDLETEYRSNANVDDAYSRVFGI.

Residues 117–232 adopt a coiled-coil conformation; it reads MNLNSPSKFL…NSSRTSDPGS (116 aa). Positions 216 to 235 are disordered; it reads RQVEDNQNSSRTSDPGSPLV. Residues 220–230 are compositionally biased toward polar residues; sequence DNQNSSRTSDP. Residues 311–327 form a helical membrane-spanning segment; sequence IRIIVCFALLAGVLPYI.

This sequence belongs to the MPS2 family. Interacts with BBP1, MPS3, and SPC24.

It is found in the nucleus membrane. Its subcellular location is the cytoplasm. The protein localises to the cytoskeleton. The protein resides in the microtubule organizing center. It localises to the spindle pole body. Component of the spindle pole body (SPB) required for insertion of the nascent SPB into the nuclear envelope and for the proper execution of spindle pole body (SPB) duplication. This chain is Monopolar spindle protein 2 (MPS2), found in Saccharomyces cerevisiae (strain ATCC 204508 / S288c) (Baker's yeast).